A 172-amino-acid chain; its full sequence is Shikimate kinase (172 aa).

Position 11–16 (11–16 (GAGKST)) interacts with ATP. Serine 15 lines the Mg(2+) pocket. Substrate is bound by residues aspartate 33, arginine 57, and glycine 79. Arginine 117 provides a ligand contact to ATP. Arginine 136 is a binding site for substrate. Position 153 (arginine 153) interacts with ATP.

It belongs to the shikimate kinase family. As to quaternary structure, monomer. The cofactor is Mg(2+).

The protein resides in the cytoplasm. It catalyses the reaction shikimate + ATP = 3-phosphoshikimate + ADP + H(+). It functions in the pathway metabolic intermediate biosynthesis; chorismate biosynthesis; chorismate from D-erythrose 4-phosphate and phosphoenolpyruvate: step 5/7. Catalyzes the specific phosphorylation of the 3-hydroxyl group of shikimic acid using ATP as a cosubstrate. This chain is Shikimate kinase, found in Pseudomonas aeruginosa (strain LESB58).